The following is a 4885-amino-acid chain: Centrosome-associated protein CEP530 (4885 aa).

A coiled-coil region spans residues 1437–1528; the sequence is VAEYEAETRG…GREKDQLRSE (92 aa).

The protein resides in the cytoplasm. It localises to the cytoskeleton. It is found in the microtubule organizing center. Its subcellular location is the centrosome. Functionally, required for proper nuclei segregation during the cell division. Plays a role in coordination of karyokinesis and cytokinesis during the tachyzoite cell cycle. The protein is Centrosome-associated protein CEP530 of Toxoplasma gondii (strain ATCC 50611 / Me49).